A 488-amino-acid polypeptide reads, in one-letter code: UDP-N-acetylmuramoyl-L-alanyl-D-glutamate--2,6-diaminopimelate ligase (488 aa).

Serine 29 contacts UDP-N-acetyl-alpha-D-muramoyl-L-alanyl-D-glutamate. Glycine 108 to serine 114 is an ATP binding site. UDP-N-acetyl-alpha-D-muramoyl-L-alanyl-D-glutamate-binding positions include threonine 150–threonine 151, serine 177, glutamine 183, and arginine 185. N6-carboxylysine is present on lysine 217. Meso-2,6-diaminopimelate contacts are provided by residues arginine 381, aspartate 405–arginine 408, glycine 453, and glutamate 457. Positions aspartate 405 to arginine 408 match the Meso-diaminopimelate recognition motif motif.

This sequence belongs to the MurCDEF family. MurE subfamily. Mg(2+) is required as a cofactor. Carboxylation is probably crucial for Mg(2+) binding and, consequently, for the gamma-phosphate positioning of ATP.

The protein resides in the cytoplasm. It carries out the reaction UDP-N-acetyl-alpha-D-muramoyl-L-alanyl-D-glutamate + meso-2,6-diaminopimelate + ATP = UDP-N-acetyl-alpha-D-muramoyl-L-alanyl-gamma-D-glutamyl-meso-2,6-diaminopimelate + ADP + phosphate + H(+). The protein operates within cell wall biogenesis; peptidoglycan biosynthesis. In terms of biological role, catalyzes the addition of meso-diaminopimelic acid to the nucleotide precursor UDP-N-acetylmuramoyl-L-alanyl-D-glutamate (UMAG) in the biosynthesis of bacterial cell-wall peptidoglycan. The chain is UDP-N-acetylmuramoyl-L-alanyl-D-glutamate--2,6-diaminopimelate ligase from Brucella melitensis biotype 1 (strain ATCC 23456 / CCUG 17765 / NCTC 10094 / 16M).